A 197-amino-acid polypeptide reads, in one-letter code: Protein GrpE (197 aa).

Positions 1–39 (MSSKEQKTPEGQAPEEIIMDQHEEIEAVEPEASAEQVDP) are disordered.

Belongs to the GrpE family. Homodimer.

It localises to the cytoplasm. Participates actively in the response to hyperosmotic and heat shock by preventing the aggregation of stress-denatured proteins, in association with DnaK and GrpE. It is the nucleotide exchange factor for DnaK and may function as a thermosensor. Unfolded proteins bind initially to DnaJ; upon interaction with the DnaJ-bound protein, DnaK hydrolyzes its bound ATP, resulting in the formation of a stable complex. GrpE releases ADP from DnaK; ATP binding to DnaK triggers the release of the substrate protein, thus completing the reaction cycle. Several rounds of ATP-dependent interactions between DnaJ, DnaK and GrpE are required for fully efficient folding. This Escherichia coli O157:H7 (strain EC4115 / EHEC) protein is Protein GrpE.